Here is a 1004-residue protein sequence, read N- to C-terminus: uncharacterized protein (1004 aa).

Residue asparagine 27 is glycosylated (N-linked (GlcNAc...) asparagine). A run of 4 helical transmembrane segments spans residues 38-58 (FGFS…LLAI), 77-97 (IVPD…LIVI), 188-208 (LSPV…LIAY), and 324-344 (FILM…SLFS). N-linked (GlcNAc...) asparagine glycans are attached at residues asparagine 392, asparagine 418, and asparagine 421. Helical transmembrane passes span 422-442 (MSLS…VIAF) and 599-619 (MSNI…IIDM). A glycan (N-linked (GlcNAc...) asparagine) is linked at asparagine 627. 2 helical membrane-spanning segments follow: residues 726–746 (GYPL…ISVF) and 823–843 (GDYI…VLGS). N-linked (GlcNAc...) asparagine glycosylation occurs at asparagine 859.

The protein to yeast YPR031w.

It localises to the membrane. This is an uncharacterized protein from Schizosaccharomyces pombe (strain 972 / ATCC 24843) (Fission yeast).